A 218-amino-acid chain; its full sequence is Large ribosomal subunit protein bL25 (218 aa).

The interval 187-218 (SATAAVEEAKEDGAPEESAQGQGAAEAQETGK) is disordered. A compositionally biased stretch (low complexity) spans 202 to 218 (EESAQGQGAAEAQETGK).

It belongs to the bacterial ribosomal protein bL25 family. CTC subfamily. Part of the 50S ribosomal subunit; part of the 5S rRNA/L5/L18/L25 subcomplex. Contacts the 5S rRNA. Binds to the 5S rRNA independently of L5 and L18.

This is one of the proteins that binds to the 5S RNA in the ribosome where it forms part of the central protuberance. In Anaplasma marginale (strain Florida), this protein is Large ribosomal subunit protein bL25.